We begin with the raw amino-acid sequence, 185 residues long: Ribosome-recycling factor (185 aa).

This sequence belongs to the RRF family.

Its subcellular location is the cytoplasm. Functionally, responsible for the release of ribosomes from messenger RNA at the termination of protein biosynthesis. May increase the efficiency of translation by recycling ribosomes from one round of translation to another. The protein is Ribosome-recycling factor of Yersinia enterocolitica serotype O:8 / biotype 1B (strain NCTC 13174 / 8081).